A 542-amino-acid chain; its full sequence is N-substituted formamide deformylase (542 aa).

A propeptide spanning residues 1–2 is cleaved from the precursor; sequence MT.

As to quaternary structure, homodimer. Zn(2+) serves as cofactor.

The enzyme catalyses N-benzylformamide + H2O = benzylamine + formate. Its activity is regulated as follows. Completely inhibited by HgCl(2), CuCl, CuCl(2) and AgNO(3). Partially inhibited by ZnCl(2) and SnCl(2). Almost completely inhibited by the reducing reagent DTT. Partially inhibited by phenylhydrazine. Moderately inhibited by phenanthroline and 8-hydroxyquinoline. Completely inhibited by the thiol-specific inhibitors N-ethylmaleimide and p-chloromercuribenzoate. Not inhibited by the carbonyl-specific inhibitors aminoguanidine and semicarbazide, the chelating agents alpha,alpha'-dipyridyl, KCN, diethyldithiocarbamate and EDTA, or the oxidizing reagents and serine-modifying reagents such as H(2)O(2), ammonium persulfate, phenylmethanesulfonyl fluoride and diisopropyl fluorophosphates. In terms of biological role, hydrolyzes N-substituted formamides, but not amides. N-benzylformamide is the preferred substrate, while N-butylformamide is hydrolyzed at a much lower rate. Has very low activity towards allylformamide, N-(2-cyclohex-1-enylethyl)formamide and N-(alpha-methylbenzyl)formamide. This is N-substituted formamide deformylase from Arthrobacter pascens.